An 880-amino-acid chain; its full sequence is MADTTVEKLATEVGKSVERLIEQFSQAGIKKGQADNVTEAEKQQLLDYLKKQHGGENAPTKMTLQRKTVSTLSVAGNGGQSKDVKVEVRKTRTFVKRDANEATLKAEEEAKVEAEALAKAKAEAEAAAAVKAKAEADAKAKADAEAKAKAKAAAEVKVVKDMSPEAEAARLEAERLKAAQEAATKRKQDEEAAKAAETARLLAEEHSKRWAEEERQRLEAEKNGDHHITTSKVARAAEDTSDLDEEKRGRRARNKSNAKKRGGKDARDGREKHMRNRSTAPESMAHGFNKPVAAVSRDVRIGETVTVSELAHLMAVKATEIIKQMMKMGSMVTINQVLDQETAQMVAEEMGHKVVLIRENELEHQVLKDRDDEDGIKQESRAPVVTIMGHVDHGKTSLLDYIRRAKVAAGEAGGITQHIGAYHVETENGMITFLDTPGHAAFTAMRARGAKATDIVVLVVAADDGVMPQTIEAIQHAKAGNVPLIVAVNKMDKPEADIDRVKSELSQHGVMSEDWGGDNMFAFVSAKTGEGVDELLEGILLQAEVLELKAVRDGMAAGVVIESQLDKGRGPVATILVQEGTLRQGDIVLCGLEYGKIRAMKDENGRSITEAGPSIPVEILGLSGVPSAGDEATVVRDERKAREVALYRQGKFRDVKLARQQKSKLENMFANMTEGEVKELNIVLKADVQGSLEAITDSLTGLSTDEVKVNIIARGVGALTETDATLAAASNAILVGFNVRADAQARKTIDSESVDLRYYSVIYNLIDEVRAAMTGMLSPEFKQQIIGLAEVRDVFKSPKLGAIAGCMVTEGTIKRSAPIRVLRDNVVIYEGELESLRRFKDDVAEVRNGMECGIGVKNYNDVRVGDQIEVFETVEIARTL.

Composition is skewed to basic and acidic residues over residues 180 to 194 and 202 to 228; these read QEAATKRKQDEEAAK and LAEEHSKRWAEEERQRLEAEKNGDHHI. The segment at 180 to 289 is disordered; that stretch reads QEAATKRKQD…APESMAHGFN (110 aa). Over residues 249–262 the composition is skewed to basic residues; it reads GRRARNKSNAKKRG. Positions 380–549 constitute a tr-type G domain; it reads SRAPVVTIMG…LLQAEVLELK (170 aa). The interval 389–396 is G1; the sequence is GHVDHGKT. 389–396 contributes to the GTP binding site; sequence GHVDHGKT. The segment at 414–418 is G2; sequence GITQH. Residues 435-438 form a G3 region; that stretch reads DTPG. GTP is bound by residues 435-439 and 489-492; these read DTPGH and NKMD. Residues 489–492 are G4; that stretch reads NKMD. The tract at residues 525–527 is G5; that stretch reads SAK.

It belongs to the TRAFAC class translation factor GTPase superfamily. Classic translation factor GTPase family. IF-2 subfamily.

Its subcellular location is the cytoplasm. One of the essential components for the initiation of protein synthesis. Protects formylmethionyl-tRNA from spontaneous hydrolysis and promotes its binding to the 30S ribosomal subunits. Also involved in the hydrolysis of GTP during the formation of the 70S ribosomal complex. The sequence is that of Translation initiation factor IF-2 from Shewanella baltica (strain OS223).